Reading from the N-terminus, the 511-residue chain is IWS1-like protein (511 aa).

The disordered stretch occupies residues 1-200; the sequence is MSDHEEESHG…DDGPVDRHGR (200 aa). Composition is skewed to low complexity over residues 11-30 and 55-86; these read ASPTSPASSGASSPLAPISP and APASPARDSSAPASPSAASPAGSRSPSPSPVK. The span at 94–103 shows a compositional bias: acidic residues; sequence DSDEDSDAEE. The span at 134–143 shows a compositional bias: basic and acidic residues; that stretch reads HEGTSKKEPT. The segment covering 166-179 has biased composition (acidic residues); that stretch reads LDEFVEGRDEEESQ. Residues 294–374 form the TFIIS N-terminal domain; it reads SALSEWLAPL…GEWARPIYHL (81 aa). Residues 382–454 are disordered; the sequence is SRQEREERDY…RARVPKPSTK (73 aa). Basic and acidic residues-rich tracts occupy residues 383–395 and 414–425; these read RQEREERDYSRMP and DQPKRPRIRDAD.

It belongs to the IWS1 family.

Its subcellular location is the nucleus. This Caenorhabditis elegans protein is IWS1-like protein.